A 536-amino-acid chain; its full sequence is CTP synthase (536 aa).

The segment at 1–267 is amidoligase domain; that stretch reads MTKFIFVTGG…DDIVIKRLQL (267 aa). Position 13 (Ser13) interacts with CTP. Ser13 contributes to the UTP binding site. 14 to 19 is a binding site for ATP; that stretch reads SLGKGI. Tyr54 serves as a coordination point for L-glutamine. Residue Asp71 coordinates ATP. Mg(2+)-binding residues include Asp71 and Glu141. Residues 148–150, 188–193, and Lys224 each bind CTP; these read DIE and KTKPTQ. UTP contacts are provided by residues 188-193 and Lys224; that span reads KTKPTQ. 240–242 lines the ATP pocket; it reads RDA. Residues 293-535 enclose the Glutamine amidotransferase type-1 domain; that stretch reads TIGLVGKYVS…IEASLKYQQN (243 aa). Gly355 contacts L-glutamine. The active-site Nucleophile; for glutamine hydrolysis is Cys382. L-glutamine contacts are provided by residues 383–386, Glu406, and Arg463; that span reads LGMQ. Residues His508 and Glu510 contribute to the active site.

It belongs to the CTP synthase family. Homotetramer.

It catalyses the reaction UTP + L-glutamine + ATP + H2O = CTP + L-glutamate + ADP + phosphate + 2 H(+). The enzyme catalyses L-glutamine + H2O = L-glutamate + NH4(+). It carries out the reaction UTP + NH4(+) + ATP = CTP + ADP + phosphate + 2 H(+). It functions in the pathway pyrimidine metabolism; CTP biosynthesis via de novo pathway; CTP from UDP: step 2/2. Its activity is regulated as follows. Allosterically activated by GTP, when glutamine is the substrate; GTP has no effect on the reaction when ammonia is the substrate. The allosteric effector GTP functions by stabilizing the protein conformation that binds the tetrahedral intermediate(s) formed during glutamine hydrolysis. Inhibited by the product CTP, via allosteric rather than competitive inhibition. Catalyzes the ATP-dependent amination of UTP to CTP with either L-glutamine or ammonia as the source of nitrogen. Regulates intracellular CTP levels through interactions with the four ribonucleotide triphosphates. In Staphylococcus aureus (strain COL), this protein is CTP synthase.